We begin with the raw amino-acid sequence, 214 residues long: MDAATRRSMLRNALLLGLFALVGVGLVALVQQFTEARIAEAQREARGRALLELLPPGSYDNHPLDSQVPTFAPKLLGLDAPRPAYVARLHGQASAVILQASAPDGYSGAIQLLVGVTAQGRLLGVRVVAHKETPGLGDRIELAKSPWVHGFDGKSLGDPADAGWAVKKDGGTFDQFAGATVTPRAVVRAVHKALRYFDANRERLLAPEEAAGHE.

Residues 13–33 form a helical membrane-spanning segment; it reads ALLLGLFALVGVGLVALVQQF. T180 bears the FMN phosphoryl threonine mark.

Belongs to the RnfG family. The complex is composed of six subunits: RnfA, RnfB, RnfC, RnfD, RnfE and RnfG. FMN is required as a cofactor.

Its subcellular location is the cell inner membrane. Part of a membrane-bound complex that couples electron transfer with translocation of ions across the membrane. The sequence is that of Ion-translocating oxidoreductase complex subunit G from Pseudomonas aeruginosa (strain UCBPP-PA14).